Here is a 1006-residue protein sequence, read N- to C-terminus: E3 ubiquitin-protein ligase MIB1 (1006 aa).

In terms of domain architecture, MIB/HERC2 1 spans N6–A74. A ZZ-type zinc finger spans residues H80 to S132. 8 residues coordinate Zn(2+): C85, C88, C100, C103, C109, C112, H118, and H122. One can recognise an MIB/HERC2 2 domain in the interval S143–A221. At S408 the chain carries Phosphoserine. ANK repeat units lie at residues D430 to G460, A463 to A492, D496 to A525, R529 to L558, E562 to I591, N595 to E627, D631 to I661, N665 to I694, and D698 to A729. 2 RING-type zinc fingers span residues C819–K854 and C866–R901. Positions Q935 to M962 form a coiled coil. Residues C963–R996 form an RING-type 3 zinc finger.

As to quaternary structure, interacts with CEP131 and PCM1. In terms of processing, ubiquitinated; this modification is inhibited in response to cellular stress, such as ultraviolet light (UV) radiation or heat shock. Ubiquitinated; possibly via autoubiquitination. Detected in all tissues tested. Present in embryo, embryonic stem cells, bladder, skeletal muscle, bladder, uterus, testis, stomach, colon, ileum, trachea, lung, aorta, kidney, spleen, liver and vas deferens (at protein level). Highly expressed in testis.

The protein resides in the cytoplasm. It localises to the cytoskeleton. The protein localises to the microtubule organizing center. It is found in the centrosome. Its subcellular location is the centriolar satellite. The protein resides in the cell membrane. It catalyses the reaction S-ubiquitinyl-[E2 ubiquitin-conjugating enzyme]-L-cysteine + [acceptor protein]-L-lysine = [E2 ubiquitin-conjugating enzyme]-L-cysteine + N(6)-ubiquitinyl-[acceptor protein]-L-lysine.. It participates in protein modification; protein ubiquitination. In terms of biological role, E3 ubiquitin-protein ligase that mediates ubiquitination of Delta receptors, which act as ligands of Notch proteins. Positively regulates the Delta-mediated Notch signaling by ubiquitinating the intracellular domain of Delta, leading to endocytosis of Delta receptors. Involved in ubiquitination of centriolar satellite CEP131, CEP290 and PCM1 proteins and hence inhibits primary cilium formation in proliferating cells. Mediates 'Lys-63'-linked polyubiquitination of TBK1, which probably participates in kinase activation. Probably mediates ubiquitination and subsequent proteasomal degradation of DAPK1, thereby antagonizing anti-apoptotic effects of DAPK1 to promote TNF-induced apoptosis. This is E3 ubiquitin-protein ligase MIB1 (Mib1) from Mus musculus (Mouse).